Here is a 2110-residue protein sequence, read N- to C-terminus: Protein Ycf2 (2110 aa).

An ATP-binding site is contributed by 1336-1343 (GSIGTGRS). The segment at 1852–1876 (EEEAELQDEEAELQDEGAGRKDEEA) is disordered. Acidic residues predominate over residues 1854 to 1866 (EAELQDEEAELQD).

Belongs to the Ycf2 family.

The protein localises to the plastid. It is found in the chloroplast stroma. Functionally, probable ATPase of unknown function. Its presence in a non-photosynthetic plant (Epifagus virginiana) and experiments in tobacco indicate that it has an essential function which is probably not related to photosynthesis. This chain is Protein Ycf2 (ycf2-A), found in Pelargonium hortorum (Common geranium).